Here is a 330-residue protein sequence, read N- to C-terminus: UPF0324 membrane protein PG_2004 (330 aa).

9 consecutive transmembrane segments (helical) span residues 13-31 (IAYPAIIVFLILTLLGSLV), 36-58 (PFTSWLTPPVALLMGLAYALIFG), 71-93 (VLLQYSVVGLGFGMNLGESLASG), 97-114 (MMFTIISVFGTLLLGWFI), 126-148 (SALISAGTAICGGSAIAAVGPIL), 158-180 (ALGTVFLLNAVALFIFPSIGHWL), 248-270 (VPLFILFFIGAIILNTYLLEAYF), 285-307 (LTLSLFFIGASLTKEVIASVGVR), and 312-329 (GLFLWILISVGSLAFILL).

Belongs to the UPF0324 family.

The protein localises to the cell membrane. This Porphyromonas gingivalis (strain ATCC BAA-308 / W83) protein is UPF0324 membrane protein PG_2004.